Here is a 242-residue protein sequence, read N- to C-terminus: Eukaryotic translation initiation factor 4E type 1B (242 aa).

A disordered region spans residues 1-42 (MLAVEVSEAEGGIREWEEEEKEEEAAERTPTGEKSPNSPRTL). Residues 16 to 25 (WEEEEKEEEA) show a composition bias toward acidic residues. Over residues 32–41 (GEKSPNSPRT) the composition is skewed to polar residues. An EIF4EBP1/2/3 binding region spans residues 62 to 65 (HPLQ). 81–82 (WQ) is an mRNA binding site. Residues 98-102 (WALYS) form an EIF4EBP1/2/3 binding region. 127–128 (WE) lines the mRNA pocket. The EIF4EBP1/2/3 binding stretch occupies residues 157 to 164 (ETLLCLIG). MRNA contacts are provided by residues 182–187 (RTKGDK) and 230–232 (TKS).

Belongs to the eukaryotic initiation factor 4E family. In terms of assembly, eIF4F is a multi-subunit complex, the composition of which varies with external and internal environmental conditions. It is composed of at least EIF4A, EIF4E and EIF4G.

In terms of biological role, recognizes and binds the 7-methylguanosine-containing mRNA cap during an early step in the initiation of protein synthesis and facilitates ribosome binding by inducing the unwinding of the mRNAs secondary structure. This is Eukaryotic translation initiation factor 4E type 1B (EIF4E1B) from Homo sapiens (Human).